The primary structure comprises 120 residues: Large ribosomal subunit protein bL19 (120 aa).

It belongs to the bacterial ribosomal protein bL19 family.

Its function is as follows. This protein is located at the 30S-50S ribosomal subunit interface and may play a role in the structure and function of the aminoacyl-tRNA binding site. This chain is Large ribosomal subunit protein bL19, found in Chlorobium chlorochromatii (strain CaD3).